The following is a 417-amino-acid chain: Transmembrane protease serine 11D (417 aa).

The Cytoplasmic segment spans residues 1-17; it reads MYRPRSMVSPSRFFNPF. The helical; Signal-anchor for type II membrane protein transmembrane segment at 18 to 38 threads the bilayer; the sequence is MVALIVIITVGLLAMTAGLLI. The Extracellular segment spans residues 39 to 417; it reads HFLAFDKRAY…RNWIRQQTGI (379 aa). Positions 46–162 constitute an SEA domain; sequence RAYFYHSNFH…SNGITSLTDQ (117 aa). 4 disulfides stabilise this stretch: Cys172–Cys291, Cys211–Cys227, Cys336–Cys352, and Cys363–Cys392. Residues 186–416 enclose the Peptidase S1 domain; the sequence is IIGGTQAETG…YRNWIRQQTG (231 aa). Active-site charge relay system residues include His226 and Asp271. Catalysis depends on Ser367, which acts as the Charge relay system.

Belongs to the peptidase S1 family. As to quaternary structure, monomer. Isoform 1 and isoform 2 are expressed in the esophagus, tongue and trachea. Isoform 2 is also highly expressed in the adrenal cortex and heart.

The protein resides in the cell membrane. It localises to the secreted. Its function is as follows. May play some biological role in the host defense system on the mucous membrane independently of or in cooperation with other substances in airway mucous or bronchial secretions. Plays a role in the proteolytic processing of ACE2. Preferentially cleaves the C-terminal side of arginine residues at the P1 position of certain peptides. Isoform 2 may play a key role in regulating adrenal proliferation by specifically cleaving N-POMC. In Rattus norvegicus (Rat), this protein is Transmembrane protease serine 11D (Tmprss11d).